Here is a 1775-residue protein sequence, read N- to C-terminus: Atrochrysone carboxylic acid synthase (1775 aa).

The region spanning 35-262 (LRRLQALSKD…YAKWASLPIF (228 aa)) is the Starter acyltransferase (SAT) domain. The region spanning 400–833 (DSKIAIVGMS…GGNTTMLLEE (434 aa)) is the Ketosynthase family 3 (KS3) domain. Catalysis depends on for beta-ketoacyl synthase activity residues C573, H708, and H750. The 311-residue stretch at 934-1244 (FAFTGQGAFY…ENNWNTLADS (311 aa)) folds into the Malonyl-CoA:ACP transacylase (MAT) domain. The product template (PT) domain stretch occupies residues 1313–1631 (TSSIHQVLQE…RSLLPTFFSP (319 aa)). The N-terminal hotdog fold stretch occupies residues 1317–1451 (HQVLQEDVTG…SAVVEYGDAN (135 aa)). Residues 1317–1626 (HQVLQEDVTG…FRRFPRSLLP (310 aa)) enclose the PKS/mFAS DH domain. H1349 serves as the catalytic Proton acceptor; for dehydratase activity. Residues 1480-1626 (AAVLPRNMAY…FRRFPRSLLP (147 aa)) form a C-terminal hotdog fold region. The active-site Proton donor; for dehydratase activity is D1537. Residues 1671-1697 (TAAPVPAPAPVPAKRAEPAPAAAQAAA) are disordered. Residues 1688–1697 (PAPAAAQAAA) are compositionally biased toward low complexity. The Carrier domain occupies 1697–1774 (ATQNPTITGA…ELKTYIEETF (78 aa)). Position 1734 is an O-(pantetheine 4'-phosphoryl)serine (S1734).

The enzyme catalyses holo-[ACP] + 8 malonyl-CoA + 8 H(+) = atrochrysone carboxyl-[ACP] + 8 CO2 + 8 CoA + 2 H2O. Its pathway is secondary metabolite biosynthesis. Its function is as follows. Non-reducing polyketide synthase; part of the gene cluster that mediates the biosynthesis of physcion, a natural anthraquinone fungicide that can prevent plant fungal infections. The pathway begins with the polyketide synthase AcPKS that condenses 8 malonyl-CoA units to synthesize atrochrysone thioester which is released from the synthase by the atrochrysone carboxyl ACP thioesterase AcTE that breaks the thioester bond and leads to free atrochrysone carboxylic acid. Spontaneous decarboxylation of atrochrysone carboxylic acid leads to the formation of atrochrysone. Then, atrochrysone undergoes spontaneous dehydration and oxidation, giving the products emodin anthrone and emodin. The O-methyltransferase AcOMT then methylates the C-6 hydroxyl of emodin to form physcion. This chain is Atrochrysone carboxylic acid synthase, found in Aspergillus chevalieri (Eurotium chevalieri).